The chain runs to 310 residues: Iron ABC transporter substrate-binding lipoprotein MtsA (310 aa).

Residues 1 to 20 form the signal peptide; sequence MGKKMSLILGAFLSVFLLVA. Residue Cys-21 is the site of N-palmitoyl cysteine attachment. Cys-21 carries S-diacylglycerol cysteine lipidation. Fe(2+) contacts are provided by His-68, His-140, Glu-206, and Asp-281.

Belongs to the bacterial solute-binding protein 9 family. Lipoprotein receptor antigen (Lrai) subfamily.

Its subcellular location is the cell membrane. Part of the ATP-binding cassette (ABC) transport system MtsABC involved in iron import. Binds iron with high affinity and specificity and delivers it to the membrane permease for translocation into the cytoplasm. Has low affinity for Zn(2+) and Cu(2+). In Streptococcus pyogenes serotype M6 (strain ATCC BAA-946 / MGAS10394), this protein is Iron ABC transporter substrate-binding lipoprotein MtsA (mtsA).